The following is a 192-amino-acid chain: Xanthine phosphoribosyltransferase (192 aa).

Xanthine is bound by residues L20 and T26. 127 to 131 contributes to the 5-phospho-alpha-D-ribose 1-diphosphate binding site; sequence ANGQA. K155 contacts xanthine.

The protein belongs to the purine/pyrimidine phosphoribosyltransferase family. Xpt subfamily. As to quaternary structure, homodimer.

It is found in the cytoplasm. The catalysed reaction is XMP + diphosphate = xanthine + 5-phospho-alpha-D-ribose 1-diphosphate. Its pathway is purine metabolism; XMP biosynthesis via salvage pathway; XMP from xanthine: step 1/1. In terms of biological role, converts the preformed base xanthine, a product of nucleic acid breakdown, to xanthosine 5'-monophosphate (XMP), so it can be reused for RNA or DNA synthesis. In Streptococcus thermophilus, this protein is Xanthine phosphoribosyltransferase.